The sequence spans 129 residues: Small ribosomal subunit protein uS9 (129 aa).

This sequence belongs to the universal ribosomal protein uS9 family.

The polypeptide is Small ribosomal subunit protein uS9 (Nitratiruptor sp. (strain SB155-2)).